The following is a 268-amino-acid chain: Helix-loop-helix protein 25 (268 aa).

A compositionally biased stretch (polar residues) spans 1-23; the sequence is MPKVIQSSMSDYRSVPYNQTPKS. A disordered region spans residues 1 to 29; the sequence is MPKVIQSSMSDYRSVPYNQTPKSASERKR. The basic motif stretch occupies residues 92–105; it reads ERRKVKTEREKIRR. The region spanning 92 to 149 is the bHLH domain; sequence ERRKVKTEREKIRRKKQDDCYAELKFFILNKQMGSYEQRLKLERITILEIIIDYIKHN. The segment at 106-149 is helix-loop-helix motif; that stretch reads KKQDDCYAELKFFILNKQMGSYEQRLKLERITILEIIIDYIKHN.

It is found in the nucleus. In terms of biological role, probable transcription factor. Modulates lifespan and also recovery from the developmentally arrested larval state known as dauer, perhaps acting upstream of phosphatase PTEN/daf-18. Regulates expression of genes involved in cell division, cell-cycle regulation, and sexual reproduction, including daf-18. The sequence is that of Helix-loop-helix protein 25 from Caenorhabditis elegans.